The following is a 170-amino-acid chain: Large ribosomal subunit protein uL5 (170 aa).

The protein belongs to the universal ribosomal protein uL5 family. In terms of assembly, part of the 50S ribosomal subunit; contacts the 5S rRNA and probably tRNA. Forms a bridge to the 30S subunit in the 70S ribosome.

Its function is as follows. This is one of the proteins that bind and probably mediate the attachment of the 5S RNA into the large ribosomal subunit, where it forms part of the central protuberance. In the 70S ribosome it contacts protein S13 of the 30S subunit (bridge B1b), connecting the 2 subunits; this bridge is implicated in subunit movement. May contact the P site tRNA; the 5S rRNA and some of its associated proteins might help stabilize positioning of ribosome-bound tRNAs. The sequence is that of Large ribosomal subunit protein uL5 from Methanobrevibacter smithii (strain ATCC 35061 / DSM 861 / OCM 144 / PS).